Here is a 510-residue protein sequence, read N- to C-terminus: 2,3-bisphosphoglycerate-independent phosphoglycerate mutase (510 aa).

Mn(2+) is bound by residues D12 and S62. S62 acts as the Phosphoserine intermediate in catalysis. Residues H123, 153-154, R185, R191, 261-264, and K336 each bind substrate; these read RD and RPDR. D403, H407, D444, H445, and H462 together coordinate Mn(2+).

It belongs to the BPG-independent phosphoglycerate mutase family. In terms of assembly, monomer. Mn(2+) serves as cofactor.

The enzyme catalyses (2R)-2-phosphoglycerate = (2R)-3-phosphoglycerate. Its pathway is carbohydrate degradation; glycolysis; pyruvate from D-glyceraldehyde 3-phosphate: step 3/5. Essential for rapid growth and for sporulation. Catalyzes the interconversion of 2-phosphoglycerate and 3-phosphoglycerate. This chain is 2,3-bisphosphoglycerate-independent phosphoglycerate mutase, found in Priestia megaterium (strain DSM 319 / IMG 1521) (Bacillus megaterium).